Here is a 449-residue protein sequence, read N- to C-terminus: Clusterin (449 aa).

The signal sequence occupies residues 1–22; the sequence is MMKTLLLFVGLLLTWESGQVLG. Residues 78–81 carry the Nuclear localization signal motif; that stretch reads KKKK. N-linked (GlcNAc...) (complex) asparagine glycosylation is present at Asn86. Intrachain disulfides connect Cys102–Cys313, Cys113–Cys305, Cys116–Cys302, Cys121–Cys295, and Cys129–Cys285. Residue Asn103 is glycosylated (N-linked (GlcNAc...) asparagine). Phosphoserine is present on Ser133. Asn145, Asn291, and Asn354 each carry an N-linked (GlcNAc...) asparagine glycan. The N-linked (GlcNAc...) (complex) asparagine glycan is linked to Asn374. Residue Ser396 is modified to Phosphoserine. The Nuclear localization signal motif lies at 443–447; sequence RKKHR.

Belongs to the clusterin family. In terms of assembly, antiparallel disulfide-linked heterodimer of an alpha chain and a beta chain. Self-associates and forms higher oligomers. Interacts with a broad range of misfolded proteins, including APP, APOC2 and LYZ. Slightly acidic pH promotes interaction with misfolded proteins. Forms high-molecular weight oligomers upon interaction with misfolded proteins. Interacts with APOA1, LRP2, CLUAP1 and PON1. Interacts with the complement membrane attack complex. Interacts (via alpha chain) with XRCC6. Interacts with SYVN1, COMMD1, BTRC, CUL1 and with ubiquitin and SCF (SKP1-CUL1-F-box protein) E3 ubiquitin-protein ligase complexes. Interacts (via alpha chain) with BAX in stressed cells, where BAX undergoes a conformation change leading to association with the mitochondrial membrane. Does not interact with BAX in unstressed cells. Found in a complex with LTF, CLU, EPPIN and SEMG1. Interacts (immaturely glycosylated pre-secreted form) with HSPA5; this interaction promotes CLU stability and facilitates stress-induced CLU retrotranslocation from the secretory pathway to the mitochondria, thereby reducing stress-induced apoptosis by stabilizing mitochondrial membrane integrity. Interacts (isoform 4) with BCL2L1; this interaction releases and activates BAX and promotes cell death. Interacts with TGFBR2 and ACVR1. Interacts (secreted form) with STMN3; this interaction may act as an important modulator during neuronal differentiation. Interacts with VLDLR and LRP8. Post-translationally, proteolytically cleaved on its way through the secretory system, probably within the Golgi lumen. Proteolytic cleavage is not necessary for its chaperone activity. All non-secreted forms are not proteolytically cleaved. Chaperone activity of uncleaved forms is dependent on a non-reducing environment. Polyubiquitinated, leading to proteasomal degradation. Under cellular stress, the intracellular level of cleaved form is reduced due to proteasomal degradation. In terms of processing, extensively glycosylated with sulfated N-linked carbohydrates. About 30% of the protein mass is comprised of complex N-linked carbohydrate. Endoplasmic reticulum (ER) stress induces changes in glycosylation status and increases level of hypoglycosylated forms. Core carbohydrates are essential for chaperone activity. Non-secreted forms are hypoglycosylated or unglycosylated. Detected in blood plasma, cerebrospinal fluid, milk, seminal plasma and colon mucosa. Detected in the germinal center of colon lymphoid nodules and in colon parasympathetic ganglia of the Auerbach plexus (at protein level). Ubiquitous. Detected in brain, testis, ovary, liver and pancreas, and at lower levels in kidney, heart, spleen and lung.

It is found in the secreted. The protein localises to the cytoplasm. Its subcellular location is the nucleus. The protein resides in the mitochondrion membrane. It localises to the cytosol. It is found in the microsome. The protein localises to the endoplasmic reticulum. Its subcellular location is the mitochondrion. The protein resides in the perinuclear region. It localises to the cytoplasmic vesicle. It is found in the secretory vesicle. The protein localises to the chromaffin granule. Functionally, functions as extracellular chaperone that prevents aggregation of non native proteins. Prevents stress-induced aggregation of blood plasma proteins. Inhibits formation of amyloid fibrils by APP, APOC2, B2M, CALCA, CSN3, SNCA and aggregation-prone LYZ variants (in vitro). Does not require ATP. Maintains partially unfolded proteins in a state appropriate for subsequent refolding by other chaperones, such as HSPA8/HSC70. Does not refold proteins by itself. Binding to cell surface receptors triggers internalization of the chaperone-client complex and subsequent lysosomal or proteasomal degradation. Protects cells against apoptosis and against cytolysis by complement: inhibits assembly of the complement membrane attack complex (MAC) by preventing polymerization of C9 pore component of the MAC complex. Intracellular forms interact with ubiquitin and SCF (SKP1-CUL1-F-box protein) E3 ubiquitin-protein ligase complexes and promote the ubiquitination and subsequent proteasomal degradation of target proteins. Promotes proteasomal degradation of COMMD1 and IKBKB. Modulates NF-kappa-B transcriptional activity. A mitochondrial form suppresses BAX-dependent release of cytochrome c into the cytoplasm and inhibit apoptosis. Plays a role in the regulation of cell proliferation. An intracellular form suppresses stress-induced apoptosis by stabilizing mitochondrial membrane integrity through interaction with HSPA5. Secreted form does not affect caspase or BAX-mediated intrinsic apoptosis and TNF-induced NF-kappa-B-activity. Secreted form act as an important modulator during neuronal differentiation through interaction with STMN3. Plays a role in the clearance of immune complexes that arise during cell injury. Does not affect caspase or BAX-mediated intrinsic apoptosis and TNF-induced NF-kappa-B-activity. Its function is as follows. Does not affect caspase or BAX-mediated intrinsic apoptosis and TNF-induced NF-kappa-B-activity. Promotes cell death through interaction with BCL2L1 that releases and activates BAX. The polypeptide is Clusterin (Homo sapiens (Human)).